Reading from the N-terminus, the 240-residue chain is Cysteine-rich venom protein (240 aa).

The signal sequence occupies residues 1–19 (MIAFIVLPILAAVLHQSSG). One can recognise an SCP domain in the interval 39–166 (DLHNSLRRSV…KYRYFYVCQY (128 aa)). Cystine bridges form between cysteine 75–cysteine 153, cysteine 92–cysteine 167, cysteine 148–cysteine 164, cysteine 186–cysteine 193, cysteine 189–cysteine 198, cysteine 202–cysteine 235, cysteine 211–cysteine 229, and cysteine 220–cysteine 233. The ShKT domain maps to 202–235 (CTQENTYSNCNSLVQQSSCQDNNMKTKCPASCFC).

The protein belongs to the CRISP family. Expressed by the venom gland.

It is found in the secreted. Functionally, may block ryanodine receptors (RYR). The protein is Cysteine-rich venom protein of Protobothrops mucrosquamatus (Taiwan habu).